A 384-amino-acid chain; its full sequence is 1-deoxy-D-xylulose 5-phosphate reductoisomerase (384 aa).

Residues Thr10, Gly11, Ser12, Ile13, Arg37, Asn38, and Asn124 each coordinate NADPH. Lys125 lines the 1-deoxy-D-xylulose 5-phosphate pocket. Glu126 is an NADPH binding site. Position 150 (Asp150) interacts with Mn(2+). 1-deoxy-D-xylulose 5-phosphate-binding residues include Ser151, Glu152, Ser176, and His199. Glu152 lines the Mn(2+) pocket. NADPH is bound at residue Gly205. 4 residues coordinate 1-deoxy-D-xylulose 5-phosphate: Ser212, Asn217, Lys218, and Glu221. Residue Glu221 coordinates Mn(2+).

It belongs to the DXR family. It depends on Mg(2+) as a cofactor. Mn(2+) serves as cofactor.

The catalysed reaction is 2-C-methyl-D-erythritol 4-phosphate + NADP(+) = 1-deoxy-D-xylulose 5-phosphate + NADPH + H(+). It functions in the pathway isoprenoid biosynthesis; isopentenyl diphosphate biosynthesis via DXP pathway; isopentenyl diphosphate from 1-deoxy-D-xylulose 5-phosphate: step 1/6. Functionally, catalyzes the NADPH-dependent rearrangement and reduction of 1-deoxy-D-xylulose-5-phosphate (DXP) to 2-C-methyl-D-erythritol 4-phosphate (MEP). This chain is 1-deoxy-D-xylulose 5-phosphate reductoisomerase, found in Clostridium perfringens (strain ATCC 13124 / DSM 756 / JCM 1290 / NCIMB 6125 / NCTC 8237 / Type A).